Here is a 175-residue protein sequence, read N- to C-terminus: Lactobacillus up-regulated protein (175 aa).

The N-terminal stretch at 1 to 18 (MRSIFLAVLGLMATSSLA) is a signal peptide. An N-linked (GlcNAc...) asparagine glycan is attached at Asn59.

The protein is Lactobacillus up-regulated protein (lbuA) of Emericella nidulans (strain FGSC A4 / ATCC 38163 / CBS 112.46 / NRRL 194 / M139) (Aspergillus nidulans).